The chain runs to 423 residues: Transcription factor IIIB 50 kDa subunit (423 aa).

A TFIIB-type zinc finger spans residues M1–S34. 4 residues coordinate Zn(2+): C5, C8, C26, and C29. Repeat unit 2 spans residues L171–K245. Low complexity predominate over residues Q325–S340. The segment at Q325–L358 is disordered. C373 carries the post-translational modification Cysteine sulfenic acid (-SOH).

It belongs to the TFIIB family. In terms of assembly, component of TFIIIB complexes. Interacts with TBP and forms a ternary complex with TBp and target DNA sequences. Post-translationally, in response to oxidative stress, a Cys-residue is reversibly oxidized to cysteine sulfenic acid. This impairs formation of a ternary complex with TBP and DNA and down-regulates expression of target genes in response to oxidative stress.

It localises to the nucleus. In terms of biological role, general activator of RNA polymerase III transcription. Factor exclusively required for RNA polymerase III transcription of genes with promoter elements upstream of the initiation sites. Contributes to the regulation of gene expression; functions as activator in the absence of oxidative stress. Down-regulates expression of target genes in response to oxidative stress. Overexpression protects cells against apoptosis in response to oxidative stress. This chain is Transcription factor IIIB 50 kDa subunit (brf2), found in Danio rerio (Zebrafish).